A 734-amino-acid polypeptide reads, in one-letter code: MALRFPRFSQGLAQDPTTRRIWFGIATAHDFESHDDITEERLYQNIFASHFGQLAIIFLWTSGNLFHVAWQGNFEAWVQDPLHVRPIAHAIWDPHFGQPAVEAFSRGGALGPVNIAYSGVYQWWYTIGLRTNEDLYTGALFLLFLSAISLIAGWLHLQPKWKPSVSWFKNAESRLNHHLSGLFGVSSLAWTGHLVHVAIPGSRGEYVRWNNFLDVLPHPQGLGPLFTGQWNLYAQNPDSSSHLFGTSQGSGTAILTLLGGFHPQTQSLWLTDIAHHHLAIAFIFLVAGHMYRTNFGIGHSIKDLLEAHIPPGGRLGRGHKGLYDTINNSLHFQLGLALASLGVITSLVAQHMYSLPAYAFIAQDFTTQAALYTHHQYIAGFIMTGAFAHGAIFFIRDYNPEQNEDNVLARMLDHKEAIISHLSWASLFLGFHTLGLYVHNDVMLAFGTPEKQILIEPIFAQWIQSAHGKTSYGFDVLLSSTDGPAFNAGRSIWLPGWLSAVNENSNSLFLTIGPGDFLVHHAIALGLHTTTLILVKGALDARGSKLMPDKKDFGYSFPCDGPGRGGTCDISAWDAFYLAVFWMLNTIGWVTFYWHWNHITLWQGNVSQFNESSTYLMGWLRDYLWLNSSQLINGYNPFGMNSLSVWAWMFLFGHLVWATGFMFLISWRGYWQELIETLAWAHERTPLANLIRWRDKPVALSIVQARLVGLAHFSVGYIFTYAAFLIASTSGKFG.

8 consecutive transmembrane segments (helical) span residues 46–69, 135–158, 175–199, 273–291, 330–353, 369–395, 417–439, and 517–535; these read IFAS…FHVA, LYTG…LHLQ, LNHH…HVAI, IAHH…GHMY, LHFQ…QHMY, AALY…IFFI, AIIS…LYVH, and FLVH…LILV. The [4Fe-4S] cluster site is built by Cys559 and Cys568. 2 helical membrane-spanning segments follow: residues 575 to 596 and 643 to 665; these read AFYL…YWHW and LSVW…MFLI. Positions 654, 662, and 670 each coordinate chlorophyll a. Trp671 provides a ligand contact to phylloquinone. A helical transmembrane segment spans residues 707 to 727; it reads LVGLAHFSVGYIFTYAAFLIA.

This sequence belongs to the PsaA/PsaB family. In terms of assembly, the PsaA/B heterodimer binds the P700 chlorophyll special pair and subsequent electron acceptors. PSI consists of a core antenna complex that captures photons, and an electron transfer chain that converts photonic excitation into a charge separation. The eukaryotic PSI reaction center is composed of at least 11 subunits. P700 is a chlorophyll a/chlorophyll a' dimer, A0 is one or more chlorophyll a, A1 is one or both phylloquinones and FX is a shared 4Fe-4S iron-sulfur center. serves as cofactor.

The protein localises to the plastid. The protein resides in the chloroplast thylakoid membrane. It catalyses the reaction reduced [plastocyanin] + hnu + oxidized [2Fe-2S]-[ferredoxin] = oxidized [plastocyanin] + reduced [2Fe-2S]-[ferredoxin]. Its function is as follows. PsaA and PsaB bind P700, the primary electron donor of photosystem I (PSI), as well as the electron acceptors A0, A1 and FX. PSI is a plastocyanin-ferredoxin oxidoreductase, converting photonic excitation into a charge separation, which transfers an electron from the donor P700 chlorophyll pair to the spectroscopically characterized acceptors A0, A1, FX, FA and FB in turn. Oxidized P700 is reduced on the lumenal side of the thylakoid membrane by plastocyanin. The polypeptide is Photosystem I P700 chlorophyll a apoprotein A2 (Citrus sinensis (Sweet orange)).